Consider the following 261-residue polypeptide: CD40 ligand (261 aa).

The Cytoplasmic segment spans residues 1–22 (MIETYSQPSPRSVAAGPPVSMK). A helical; Signal-anchor for type II membrane protein membrane pass occupies residues 23–43 (IFMYLLTVFLITQMIGSALFA). Residues 44–240 (AYLHRRLDKI…LQPGASVFVN (197 aa)) lie on the Extracellular side of the membrane. Residues 122–261 (IAAHVISEAS…GFTSFGLLKL (140 aa)) form the THD domain. Cys178 and Cys218 are joined by a disulfide. N-linked (GlcNAc...) asparagine glycosylation occurs at Asn240.

This sequence belongs to the tumor necrosis factor family. Homotrimer. Interacts with CD28. CD40 ligand, soluble form: Exists as either a monomer or a homotrimer. Forms a ternary complex between CD40 and integrins for CD40-CD40LG signaling. Post-translationally, the soluble form derives from the membrane form by proteolytic processing.

The protein localises to the cell membrane. It is found in the cell surface. The protein resides in the secreted. In terms of biological role, cytokine that acts as a ligand to CD40/TNFRSF5. Costimulates T-cell proliferation and cytokine production. Its cross-linking on T-cells generates a costimulatory signal which enhances the production of IL4 and IL10 in conjunction with the TCR/CD3 ligation and CD28 costimulation. Induces the activation of NF-kappa-B. Induces the activation of kinases MAPK8 and PAK2 in T-cells. Mediates B-cell proliferation in the absence of co-stimulus as well as IgE production in the presence of IL4. Involved in immunoglobulin class switching. Functionally, acts as a ligand for integrins, specifically ITGA5:ITGB1 and ITGAV:ITGB3; both integrins and the CD40 receptor are required for activation of CD40-CD40LG signaling, which have cell-type dependent effects, such as B-cell activation, NF-kappa-B signaling and anti-apoptotic signaling. This Sus scrofa (Pig) protein is CD40 ligand (CD40LG).